Consider the following 1498-residue polypeptide: Golgin subfamily A member 3 (1498 aa).

The residue at position 1 (M1) is an N-acetylmethionine. A disordered region spans residues 1–118 (MDGASAEQDG…GTSAEGSVRK (118 aa)). S18 is subject to Phosphoserine. Residues 27–36 (PLKPPGPLVP) show a composition bias toward pro residues. S57 carries the post-translational modification Phosphoserine. Residues 71–81 (PTPPFPDPPSS) show a composition bias toward pro residues. Residues 121 to 141 (LQSLRLSLPMQETQLCSTDSP) are interaction with GOPC. Disordered regions lie at residues 166-195 (RVKR…MLNP) and 216-325 (SVPR…SAST). The tract at residues 172-257 (ERSSQPATKT…DYRTEDSNAG (86 aa)) is golgi-targeting domain. 2 stretches are compositionally biased toward polar residues: residues 173–184 (RSSQPATKTRLF) and 269–291 (TKGS…SLSP). S272 carries the post-translational modification Phosphoserine. A compositionally biased stretch (low complexity) spans 315-324 (SDSSSYSSAS). Residues S385, S389, and S465 each carry the phosphoserine modification. The stretch at 394-1459 (VSLESSAAET…ALTVHESLSS (1066 aa)) forms a coiled coil. The segment covering 789 to 801 (KEELDRGARRLEE) has biased composition (basic and acidic residues). Disordered stretches follow at residues 789–809 (KEEL…TSET), 974–993 (QKQK…KEMK), 1376–1400 (RGAA…PIKI), and 1440–1498 (DSLQ…GPGE). At S983 the chain carries Phosphoserine. Residues 1376–1387 (RGAAKTRKEPKG) show a composition bias toward basic and acidic residues. The residue at position 1392 (S1392) is a Phosphoserine. Positions 1440–1452 (DSLQRQMEEHALT) are enriched in basic and acidic residues.

As to quaternary structure, homodimer. Interacts with GOLGA7. Isoform 1 interacts with GOPC while isoform 3 does not. In terms of processing, cleaved by caspases in apoptotic cells. In terms of tissue distribution, expressed in all tissues tested. Expressed in liver, testis, lung, heart, salivary gland and kidney.

The protein localises to the cytoplasm. The protein resides in the golgi apparatus. Its subcellular location is the golgi stack membrane. In terms of biological role, golgi auto-antigen; probably involved in maintaining Golgi structure. The chain is Golgin subfamily A member 3 (GOLGA3) from Homo sapiens (Human).